Here is a 308-residue protein sequence, read N- to C-terminus: Mitoferrin (308 aa).

The next 6 membrane-spanning stretches (helical) occupy residues 13-29 (GGSF…AGFA), 69-89 (ITGL…SHAV), 111-131 (IKVG…ASPM), 168-184 (YTTT…VYFA), 213-233 (LVAG…FDVV), and 285-302 (MVFH…YEYF). Solcar repeat units follow at residues 14–100 (GSFY…LKFK), 108–192 (HHPI…LKKI), and 207–305 (YQLI…FKFI).

Belongs to the mitochondrial carrier (TC 2.A.29) family.

It localises to the mitochondrion inner membrane. Mitochondrial solute carriers shuttle metabolites, nucleotides, and cofactors through the mitochondrial inner membrane. Mitochondrial iron transporter that mediates iron uptake. Probably required for heme synthesis of hemoproteins and Fe-S cluster assembly. In Dictyostelium discoideum (Social amoeba), this protein is Mitoferrin (mcfF).